The sequence spans 304 residues: Dihydroorotate dehydrogenase B (NAD(+)), catalytic subunit (304 aa).

Residues serine 21 and 45 to 46 (KA) contribute to the FMN site. Residues lysine 45 and 69–73 (NAIGL) contribute to the substrate site. Asparagine 99 and asparagine 127 together coordinate FMN. Asparagine 127 provides a ligand contact to substrate. The Nucleophile role is filled by cysteine 130. FMN is bound by residues lysine 165 and isoleucine 191. 192–193 (NT) provides a ligand contact to substrate. Residues glycine 217, 243–244 (GG), and 265–266 (GT) each bind FMN.

Belongs to the dihydroorotate dehydrogenase family. Type 1 subfamily. As to quaternary structure, heterotetramer of 2 PyrK and 2 PyrD type B subunits. FMN is required as a cofactor.

It localises to the cytoplasm. It carries out the reaction (S)-dihydroorotate + NAD(+) = orotate + NADH + H(+). It participates in pyrimidine metabolism; UMP biosynthesis via de novo pathway; orotate from (S)-dihydroorotate (NAD(+) route): step 1/1. Its function is as follows. Catalyzes the conversion of dihydroorotate to orotate with NAD(+) as electron acceptor. In Listeria monocytogenes serovar 1/2a (strain ATCC BAA-679 / EGD-e), this protein is Dihydroorotate dehydrogenase B (NAD(+)), catalytic subunit (pyrD).